The following is a 297-amino-acid chain: CASP-like protein 2U8 (297 aa).

The Cytoplasmic portion of the chain corresponds to 1-10 (MLELYEKRRA). Residues 11–31 (LLLLRLAAMFLSLAALLITVL) traverse the membrane as a helical segment. At 32-64 (NREDGFFSINVFGSPQPILAKATADFTLVKGLK) the chain is on the extracellular side. Residues 65–85 (FFAGAMGIVAGYSFLQLAIAM) traverse the membrane as a helical segment. The Cytoplasmic portion of the chain corresponds to 86 to 101 (ASIFSGAPSILGGKRM). A helical membrane pass occupies residues 102–122 (AWLCFVGDMTASHLCAAAAAV). At 123–148 (SAQLAYLGKRGAPMWSAVCTYFSHYC) the chain is on the extracellular side. Residues 149–169 (LVFGLAVILAFLATLAALLVA) traverse the membrane as a helical segment. The Cytoplasmic segment spans residues 170-297 (SISSYHLAYD…RVLEMETPCK (128 aa)).

It belongs to the Casparian strip membrane proteins (CASP) family. Homodimer and heterodimers.

It localises to the cell membrane. The sequence is that of CASP-like protein 2U8 from Selaginella moellendorffii (Spikemoss).